The sequence spans 196 residues: uncharacterized protein (196 aa).

The protein to H.influenzae HI_0431.

This is an uncharacterized protein from Salmonella typhi.